Reading from the N-terminus, the 528-residue chain is MTRDFKPGDLIFAKMKGYPHWPARVDEVPDGAVKPPTNKLPIFFFGTHETAFLGPKDIFPYSENKEKYGKPNKRKGFNEGLWEIDNNPKVKFSSQQVSTKQSNASSDVEAEEKETSVSKEDTDQEEKASNEDVTKAADITTPKAARRGRKRKAEKQVDTEEAGVVTAATASNVKASPKRGRPAATEVKIPKPRGRPKVVKQPCPSESDMVIDEDKSKKKGPEEKPPKKQLKKEEEGQKEEEKPRKEPDKKEGKKEVESKRKNLAKPGVTSTSDSEEDDDQEGEKKRKGGRHFQAAHRRNMLKGQHEKEAADRKRKQEEQMETEQQTKDEGKKPEVKKVEKKRETSMDSRLQRIHAEIKNSLKIDNLDVNRCIEALDELASLQVTMQQAQKHTEMITTLKKIRRFKVSQVIMEKSTMLYNKFKNMFLVGEGDSVITQVLNKSLAEQRQHEEANKTKDQGKKGPNKKLEKEQTGTKSLNGGSDAQESNHPQHNGDSAEESKDSREAGSKTKTPGEEREAEVSLKESTLDN.

The region spanning 7–64 is the PWWP domain; it reads PGDLIFAKMKGYPHWPARVDEVPDGAVKPPTNKLPIFFFGTHETAFLGPKDIFPYSEN. Residue Lys75 forms a Glycyl lysine isopeptide (Lys-Gly) (interchain with G-Cter in SUMO2) linkage. The segment at 86-347 is disordered; sequence NNPKVKFSSQ…VEKKRETSMD (262 aa). Positions 92–106 are enriched in polar residues; sequence FSSQQVSTKQSNASS. Ser102, Ser105, and Ser106 each carry phosphoserine. Basic and acidic residues predominate over residues 113 to 135; it reads KETSVSKEDTDQEEKASNEDVTK. Phosphothreonine occurs at positions 115 and 122. At Ser129 the chain carries Phosphoserine. Phosphothreonine is present on Thr141. Residues 144 to 153 show a composition bias toward basic residues; it reads AARRGRKRKA. Positions 146–156 match the Nuclear localization signal motif; sequence RRGRKRKAEKQ. Phosphoserine occurs at positions 176 and 205. Basic and acidic residues predominate over residues 212–260; that stretch reads DEDKSKKKGPEEKPPKKQLKKEEEGQKEEEKPRKEPDKKEGKKEVESKR. Position 270 is a phosphoserine (Ser270). Thr271 is modified (phosphothreonine). Phosphoserine occurs at positions 272 and 274. Over residues 285–300 the composition is skewed to basic residues; it reads KRKGGRHFQAAHRRNM. Residues 303 to 347 show a composition bias toward basic and acidic residues; that stretch reads GQHEKEAADRKRKQEEQMETEQQTKDEGKKPEVKKVEKKRETSMD. Coiled-coil stretches lie at residues 304–332 and 369–393; these read QHEK…EGKK and NRCI…KHTE. Positions 338-415 are integrase-binding domain (IBD); it reads VEKKRETSMD…VSQVIMEKST (78 aa). Residue Ser432 is modified to Phosphoserine. Thr435 is subject to Phosphothreonine. Phosphoserine is present on Ser441. Positions 444 to 471 are enriched in basic and acidic residues; sequence EQRQHEEANKTKDQGKKGPNKKLEKEQT. The tract at residues 444–528 is disordered; that stretch reads EQRQHEEANK…VSLKESTLDN (85 aa). Positions 472–492 are enriched in polar residues; sequence GTKSLNGGSDAQESNHPQHNG. The segment covering 496-528 has biased composition (basic and acidic residues); sequence EESKDSREAGSKTKTPGEEREAEVSLKESTLDN. Citrulline is present on Arg515. The residue at position 520 (Ser520) is a Phosphoserine. Position 525 is a phosphothreonine (Thr525).

This sequence belongs to the HDGF family. In terms of assembly, monomer. Interacts with IFRD1/PC4. Interacts (via IBD domain) with POGZ (via IBM motif) and CDCA7L (via IBM motifs). Interacts (via IBD domain) with KMT2A (via IBM motifs) with a moderate affinity whereas interacts with the KMT2A-MEN1 complex with a greater affinity; MEN1 enhances interaction of KMT2A with PSIP1. Interacts (via IBD domain) with IWS1 (via IBM motif), MED1 (via IBM motif) and DBF4 (via IBM motifs). Post-translationally, citrullinated by PADI4.

It is found in the nucleus. Transcriptional coactivator involved in neuroepithelial stem cell differentiation and neurogenesis. Involved in particular in lens epithelial cell gene regulation and stress responses. May play an important role in lens epithelial to fiber cell terminal differentiation. May play a protective role during stress-induced apoptosis. The polypeptide is PC4 and SFRS1-interacting protein (Psip1) (Rattus norvegicus (Rat)).